Reading from the N-terminus, the 547-residue chain is RING finger protein ETP1 homolog (547 aa).

The RING-type zinc-finger motif lies at 208–248 (CVVCLERMDSSITGLITIVCQHTFHCPCLQKWGNSSCPVCR). The segment at 245 to 338 (PVCRYTQKVQ…GKLVELSTDG (94 aa)) adopts a UBP-type; degenerate zinc-finger fold. Zn(2+) is bound by residues cysteine 262, cysteine 265, cysteine 274, cysteine 277, cysteine 282, histidine 289, histidine 293, and histidine 299. Positions 514–523 (LPNNSTVRSN) are enriched in polar residues. The tract at residues 514 to 547 (LPNNSTVRSNSVKSKKKKKKKPVVPSSSGSLGTD) is disordered. Basic residues predominate over residues 526–535 (KSKKKKKKKP).

It localises to the cytoplasm. In terms of biological role, may act as a cytoplasmic retention protein with a role in regulating nuclear transport. The sequence is that of RING finger protein ETP1 homolog from Schizosaccharomyces pombe (strain 972 / ATCC 24843) (Fission yeast).